The primary structure comprises 416 residues: S-layer protein B (416 aa).

An N-terminal signal peptide occupies residues 1–20 (MKYNLLPLILLSLLVAPLLA). Positions 310–330 (IASLNSTIQSLESQISSLSST) form a coiled coil. The helical transmembrane segment at 392-412 (IALAVSIIAIIISIVVLILVF) threads the bilayer.

Belongs to the Sulfolobales SlaB family. In terms of assembly, the mushroom-shaped unit cells of the Sulfolobales' S-layers may consist of three SlaB subunits and six SlaA subunits.

Its subcellular location is the secreted. The protein resides in the cell wall. It is found in the S-layer. The protein localises to the cell membrane. S-layer small protein. May anchor the complex to the cell membrane. In Metallosphaera sedula (strain ATCC 51363 / DSM 5348 / JCM 9185 / NBRC 15509 / TH2), this protein is S-layer protein B.